The primary structure comprises 132 residues: Small ribosomal subunit protein uS8 (132 aa).

The protein belongs to the universal ribosomal protein uS8 family. Part of the 30S ribosomal subunit. Contacts proteins S5 and S12.

In terms of biological role, one of the primary rRNA binding proteins, it binds directly to 16S rRNA central domain where it helps coordinate assembly of the platform of the 30S subunit. The polypeptide is Small ribosomal subunit protein uS8 (Streptococcus pneumoniae (strain Taiwan19F-14)).